The sequence spans 485 residues: Sulfate adenylyltransferase subunit 1 (485 aa).

In terms of domain architecture, tr-type G spans 17-232 (KDLLRLLTAG…LETVHIDNDH (216 aa)). The interval 26-33 (GSVDDGKS) is G1. 26 to 33 (GSVDDGKS) contributes to the GTP binding site. The G2 stretch occupies residues 84-88 (GITID). Positions 105-108 (DTPG) are G3. GTP is bound by residues 105 to 109 (DTPGH) and 160 to 163 (NKMD). The interval 160-163 (NKMD) is G4. Positions 197–199 (SAL) are G5.

This sequence belongs to the TRAFAC class translation factor GTPase superfamily. Classic translation factor GTPase family. CysN/NodQ subfamily. As to quaternary structure, heterodimer composed of CysD, the smaller subunit, and CysN.

The enzyme catalyses sulfate + ATP + H(+) = adenosine 5'-phosphosulfate + diphosphate. Its pathway is sulfur metabolism; hydrogen sulfide biosynthesis; sulfite from sulfate: step 1/3. In terms of biological role, with CysD forms the ATP sulfurylase (ATPS) that catalyzes the adenylation of sulfate producing adenosine 5'-phosphosulfate (APS) and diphosphate, the first enzymatic step in sulfur assimilation pathway. APS synthesis involves the formation of a high-energy phosphoric-sulfuric acid anhydride bond driven by GTP hydrolysis by CysN coupled to ATP hydrolysis by CysD. In Bacteroides thetaiotaomicron (strain ATCC 29148 / DSM 2079 / JCM 5827 / CCUG 10774 / NCTC 10582 / VPI-5482 / E50), this protein is Sulfate adenylyltransferase subunit 1.